We begin with the raw amino-acid sequence, 471 residues long: BRISC complex subunit FAM175B (471 aa).

The MPN domain occupies 7–161 (LVTISGAALS…THKFRHVFLR (155 aa)). A coiled-coil region spans residues 245–272 (ESDLEVAELEKQVHELKIKIATQQLAKR). The tract at residues 343–445 (AEKSRRAGRS…FSDAECPISS (103 aa)) is disordered. The span at 359–370 (NQQQETQNFFTN) shows a compositional bias: low complexity.

The protein belongs to the FAM175 family. Abro1 subfamily. As to quaternary structure, component of the BRISC complex, at least composed of FAM175B/ABRO1, BRCC3/BRCC36, BABAM2 and BABAM1/NBA1. Within the complex, interacts directly with BRCC3/BRCC36. The heterodimer with BRCC3/BRCC36 assembles into a heterotetramer. The BRISC complex binds polyubiquitin.

It localises to the cytoplasm. The protein resides in the nucleus. The protein localises to the cytoskeleton. It is found in the spindle pole. In terms of biological role, component of the BRISC complex that specifically cleaves 'Lys-63'-linked polyubiquitin, leaving the last ubiquitin chain attached to its substrates. Does not have activity by itself, but the catalytic subunit BRCC3/BRCC36 needs to be associated into a heterotetramer with FAM175B for minimal in vitro activity. May act as a central scaffold protein that assembles the various components of the BRISC complex and retains them in the cytoplasm. Plays a role in regulating the onset of apoptosis via its role in modulating 'Lys-63'-linked ubiquitination of target proteins. Required for normal mitotic spindle assembly and microtubule attachment to kinetochores via its role in deubiquitinating numa1. This chain is BRISC complex subunit FAM175B, found in Camponotus floridanus (Florida carpenter ant).